The sequence spans 460 residues: Nuclear transport factor 2 (460 aa).

Positions 15–131 (VGRAFVEQYY…YFVLNDVFRF (117 aa)) constitute an NTF2 domain. 3 disordered regions span residues 207–226 (EPPTQISHNEILSVPQGDAP), 238–289 (KSSP…VDVE), and 361–460 (RQAV…GGSS). One can recognise an RRM domain in the interval 293–370 (HSIYVRNLPF…RQAVVEEKKT (78 aa)). The segment covering 373-382 (RGGGNNGGSR) has biased composition (gly residues). Positions 383-394 (GRYFSGRGSFRN) are enriched in low complexity. 2 stretches are compositionally biased toward gly residues: residues 399–416 (GGRGGGGRGGYGRGGGEF) and 450–460 (GRGGARGGGSS).

Interacts with MBD6.

The protein resides in the cytoplasm. It localises to the nucleus. Involved in RNA-directed DNA methylation (RdDM). This Arabidopsis thaliana (Mouse-ear cress) protein is Nuclear transport factor 2.